The following is a 391-amino-acid chain: Phosphoglycerate kinase (391 aa).

Substrate-binding positions include 21 to 23, Arg-36, 59 to 62, Arg-113, and Arg-146; these read DLN and HLGR. ATP contacts are provided by residues Lys-197, Glu-319, and 345 to 348; that span reads GGDT.

Belongs to the phosphoglycerate kinase family. In terms of assembly, monomer.

Its subcellular location is the cytoplasm. It catalyses the reaction (2R)-3-phosphoglycerate + ATP = (2R)-3-phospho-glyceroyl phosphate + ADP. The protein operates within carbohydrate degradation; glycolysis; pyruvate from D-glyceraldehyde 3-phosphate: step 2/5. This Xanthomonas axonopodis pv. citri (strain 306) protein is Phosphoglycerate kinase.